The primary structure comprises 280 residues: uncharacterized protein (280 aa).

2 disordered regions span residues 1 to 83 (MELK…EEEQ) and 248 to 280 (IRHREEKDQRDQNQKQKQDDKEQDSYKIEEARL). Polar residues predominate over residues 12–25 (SAKTDNHTVYQNSP). 2 stretches are compositionally biased toward basic and acidic residues: residues 41–71 (KQTRQEKTTSSKGNTRTESRKFADEEKRVDD) and 249–280 (RHREEKDQRDQNQKQKQDDKEQDSYKIEEARL).

It belongs to the chlamydial CPn_0705/CT_671/TC_0042 family.

This is an uncharacterized protein from Chlamydia pneumoniae (Chlamydophila pneumoniae).